The chain runs to 466 residues: Cytochrome P450 85A (466 aa).

A helical transmembrane segment spans residues 2–22 (ALFMAILGVLVLLLCLCSALL). A heme-binding site is contributed by Cys414.

The protein belongs to the cytochrome P450 family. It depends on heme as a cofactor.

The protein resides in the membrane. In terms of biological role, catalyzes the C6-oxidation step in brassinosteroids biosynthesis. The chain is Cytochrome P450 85A from Phaseolus vulgaris (Kidney bean).